Reading from the N-terminus, the 640-residue chain is Chaperone protein HtpG (640 aa).

The segment at 1 to 352 is a; substrate-binding; it reads MTEQTATQNY…SADLPLNVSR (352 aa). Residues 353-571 are b; the sequence is ELLQESRDVK…DGELSPQLIR (219 aa). Residues 572-640 are c; the sequence is MLKQAGQAVP…VKRINSLLLK (69 aa).

The protein belongs to the heat shock protein 90 family. In terms of assembly, homodimer.

Its subcellular location is the cytoplasm. Molecular chaperone. Has ATPase activity. This Acinetobacter baylyi (strain ATCC 33305 / BD413 / ADP1) protein is Chaperone protein HtpG.